Here is a 434-residue protein sequence, read N- to C-terminus: Cytochrome c biogenesis protein CcsB (434 aa).

The next 3 membrane-spanning stretches (helical) occupy residues 15–35, 73–93, and 163–183; these read LRVAIVLLLLIAACSGLGTAI, SNWFLLLLAWLGLALLLCSLR, and VGPLLVHTGLIVFMVGAVVGA.

This sequence belongs to the Ccs1/CcsB family. May interact with CcsA.

It localises to the cellular thylakoid membrane. Required during biogenesis of c-type cytochromes (cytochrome c6 and cytochrome f) at the step of heme attachment. This chain is Cytochrome c biogenesis protein CcsB, found in Synechococcus sp. (strain RCC307).